We begin with the raw amino-acid sequence, 1106 residues long: Probable LRR receptor-like serine/threonine-protein kinase At1g74360 (1106 aa).

The signal sequence occupies residues 1–34 (MTMVTRVIMTDDDSQSLCFLCFLLFFFITAIAVA). Over 35–736 (GDSLDSDREV…PRTLLLIWIS (702 aa)) the chain is Extracellular. 7 LRR repeats span residues 86-109 (RSRV…NFSA), 110-134 (LTEL…LSRC), 136-156 (NLKH…LPGL), 157-182 (SNLE…LFCN), 184-204 (LVVA…IFNG), 205-226 (CRNL…WTGF), and 227-250 (GRLV…MFRG). N-linked (GlcNAc...) asparagine glycans are attached at residues N93 and N106. Residue N141 is glycosylated (N-linked (GlcNAc...) asparagine). 2 N-linked (GlcNAc...) asparagine glycosylation sites follow: N188 and N193. 2 N-linked (GlcNAc...) asparagine glycosylation sites follow: N242 and N251. LRR repeat units follow at residues 252–275 (CTLQ…VSNC), 276–299 (QNLN…IGSI), 300–323 (SSLK…LLNL), 325–346 (NLVF…IFGR), 348–371 (TQVK…NILK), 372–396 (LPNL…ISQI), 398–419 (SLKF…EYGN), 420–443 (MPGL…SFGK), 445–468 (TSLL…IGNC), 470–492 (SLLW…LTRM), 566–593 (VRTL…ISQM), 594–617 (DRLS…IGQL), 619–640 (LAFL…IGNL), 641–664 (KCLQ…LNDL), and 666–690 (ELSK…QVAT). Residues N309 and N322 are each glycosylated (N-linked (GlcNAc...) asparagine). N-linked (GlcNAc...) asparagine glycosylation is found at N365, N374, N384, and N408. 2 N-linked (GlcNAc...) asparagine glycosylation sites follow: N454 and N467. N623, N628, N652, N671, N709, and N713 each carry an N-linked (GlcNAc...) asparagine glycan. Residues 737–757 (LALALAFIACLVVSGIVLMVV) traverse the membrane as a helical segment. Over 758 to 1106 (KASREAEIDL…GLSSQGYIEM (349 aa)) the chain is Cytoplasmic. A phosphothreonine mark is found at T803 and T811. The region spanning 814–1095 (FSEERVVGRG…VKISGKAELF (282 aa)) is the Protein kinase domain. ATP-binding positions include 820-828 (VGRGGYGTV) and K842. D941 (proton acceptor) is an active-site residue. Position 983 is a phosphotyrosine (Y983). At T991 the chain carries Phosphothreonine.

It belongs to the protein kinase superfamily. Ser/Thr protein kinase family.

It localises to the mitochondrion membrane. It catalyses the reaction L-seryl-[protein] + ATP = O-phospho-L-seryl-[protein] + ADP + H(+). The enzyme catalyses L-threonyl-[protein] + ATP = O-phospho-L-threonyl-[protein] + ADP + H(+). The protein is Probable LRR receptor-like serine/threonine-protein kinase At1g74360 of Arabidopsis thaliana (Mouse-ear cress).